Consider the following 679-residue polypeptide: Transketolase (679 aa).

H30 lines the substrate pocket. Thiamine diphosphate is bound by residues H69 and 116 to 118 (GPL). Mg(2+) is bound at residue D157. Residues G158 and N187 each coordinate thiamine diphosphate. N187 and I189 together coordinate Mg(2+). Substrate-binding residues include H262, R358, and S385. Residue H262 participates in thiamine diphosphate binding. The thiamine diphosphate site is built by E417 and F444. E417 serves as the catalytic Proton donor. Substrate-binding residues include H468, D476, and R527.

It belongs to the transketolase family. In terms of assembly, homodimer. The cofactor is Mg(2+). Ca(2+) serves as cofactor. It depends on Mn(2+) as a cofactor. Co(2+) is required as a cofactor. Requires thiamine diphosphate as cofactor.

The enzyme catalyses D-sedoheptulose 7-phosphate + D-glyceraldehyde 3-phosphate = aldehydo-D-ribose 5-phosphate + D-xylulose 5-phosphate. In terms of biological role, catalyzes the transfer of a two-carbon ketol group from a ketose donor to an aldose acceptor, via a covalent intermediate with the cofactor thiamine pyrophosphate. This Kluyveromyces lactis (strain ATCC 8585 / CBS 2359 / DSM 70799 / NBRC 1267 / NRRL Y-1140 / WM37) (Yeast) protein is Transketolase (TKL1).